The following is a 498-amino-acid chain: Glycerol kinase (498 aa).

T12 serves as a coordination point for ADP. ATP is bound by residues T12, T13, and S14. A sn-glycerol 3-phosphate-binding site is contributed by T12. Residue R16 participates in ADP binding. Sn-glycerol 3-phosphate contacts are provided by R82, E83, and Y134. Positions 82, 83, and 134 each coordinate glycerol. Position 230 is a phosphohistidine; by HPr (H230). D244 lines the sn-glycerol 3-phosphate pocket. Glycerol is bound by residues D244 and Q245. ADP is bound by residues T266 and G309. Residues T266, G309, Q313, and G410 each coordinate ATP. G410 and N414 together coordinate ADP.

Belongs to the FGGY kinase family. As to quaternary structure, homotetramer and homodimer (in equilibrium). The phosphoenolpyruvate-dependent sugar phosphotransferase system (PTS), including enzyme I, and histidine-containing protein (HPr) are required for the phosphorylation, which leads to the activation of the enzyme.

It carries out the reaction glycerol + ATP = sn-glycerol 3-phosphate + ADP + H(+). The protein operates within polyol metabolism; glycerol degradation via glycerol kinase pathway; sn-glycerol 3-phosphate from glycerol: step 1/1. With respect to regulation, activated by phosphorylation and inhibited by fructose 1,6-bisphosphate (FBP). Its function is as follows. Key enzyme in the regulation of glycerol uptake and metabolism. Catalyzes the phosphorylation of glycerol to yield sn-glycerol 3-phosphate. In Staphylococcus aureus (strain Mu50 / ATCC 700699), this protein is Glycerol kinase.